Reading from the N-terminus, the 238-residue chain is Ribonuclease PH (238 aa).

Phosphate is bound by residues arginine 86 and 124–126; that span reads GTR.

This sequence belongs to the RNase PH family. In terms of assembly, homohexameric ring arranged as a trimer of dimers.

It carries out the reaction tRNA(n+1) + phosphate = tRNA(n) + a ribonucleoside 5'-diphosphate. In terms of biological role, phosphorolytic 3'-5' exoribonuclease that plays an important role in tRNA 3'-end maturation. Removes nucleotide residues following the 3'-CCA terminus of tRNAs; can also add nucleotides to the ends of RNA molecules by using nucleoside diphosphates as substrates, but this may not be physiologically important. Probably plays a role in initiation of 16S rRNA degradation (leading to ribosome degradation) during starvation. The polypeptide is Ribonuclease PH (Klebsiella pneumoniae (strain 342)).